The chain runs to 261 residues: Flap endonuclease Xni (261 aa).

Aspartate 105 contacts Mg(2+). In terms of domain architecture, 5'-3' exonuclease spans 164–256 (SQFLDLMALA…DFRVNSPTKA (93 aa)). Leucine 172, alanine 173, proline 181, isoleucine 183, and isoleucine 186 together coordinate K(+). The interaction with DNA stretch occupies residues 185–190 (GIGPKS).

It belongs to the Xni family. Requires Mg(2+) as cofactor. The cofactor is K(+).

Its function is as follows. Has flap endonuclease activity. During DNA replication, flap endonucleases cleave the 5'-overhanging flap structure that is generated by displacement synthesis when DNA polymerase encounters the 5'-end of a downstream Okazaki fragment. This Shewanella oneidensis (strain ATCC 700550 / JCM 31522 / CIP 106686 / LMG 19005 / NCIMB 14063 / MR-1) protein is Flap endonuclease Xni.